A 271-amino-acid polypeptide reads, in one-letter code: 3-methyl-2-oxobutanoate hydroxymethyltransferase 2 (271 aa).

Positions 53 and 92 each coordinate Mg(2+). Residues 53-54 (DS), D92, and K120 each bind 3-methyl-2-oxobutanoate. E122 provides a ligand contact to Mg(2+). E189 serves as the catalytic Proton acceptor.

It belongs to the PanB family. As to quaternary structure, homodecamer; pentamer of dimers. The cofactor is Mg(2+).

The protein resides in the cytoplasm. It catalyses the reaction 3-methyl-2-oxobutanoate + (6R)-5,10-methylene-5,6,7,8-tetrahydrofolate + H2O = 2-dehydropantoate + (6S)-5,6,7,8-tetrahydrofolate. It participates in cofactor biosynthesis; (R)-pantothenate biosynthesis; (R)-pantoate from 3-methyl-2-oxobutanoate: step 1/2. Functionally, catalyzes the reversible reaction in which hydroxymethyl group from 5,10-methylenetetrahydrofolate is transferred onto alpha-ketoisovalerate to form ketopantoate. The protein is 3-methyl-2-oxobutanoate hydroxymethyltransferase 2 of Burkholderia lata (strain ATCC 17760 / DSM 23089 / LMG 22485 / NCIMB 9086 / R18194 / 383).